Here is a 402-residue protein sequence, read N- to C-terminus: MDKYDGSRVFFREMCKNNRDDFPYRRGVIMSELHTPCCPVVCKLILPDPLTIDFISKIQQKPFLCIQFCSVLPCLEILEEFDRRSKNDKSLRRFVDYEGATTLLTFNELFNKYSRIEGNQFVFHVDSDKYLLNEHTSKKIIDLINPSISIIPTLSLKHSERKKWSARKRTKLNDLYQTYYETLSRYPNSTKLVKPIHPCIELKEMGDFEVIEFPGFGFGESLNERYEWIKEMGKNLTGKEVRIIQLKTGTPLEILHAVLMGFDVVISPYPESLSEQGFALSFELPSEFEGNYEPEYVLNLLNERCKFFDGVYKDQIKDIVDLKNSVHIDVVESLMDEKSVRKESRAYINHLLNCKEMNGNIILSSHNLYMYELLFQRIRDSIENDTLVNFVYNFIQLNVKRD.

This sequence belongs to the queuine tRNA-ribosyltransferase family.

The sequence is that of Queuine tRNA-ribosyltransferase-like protein from Theileria parva (East coast fever infection agent).